A 149-amino-acid polypeptide reads, in one-letter code: Large ribosomal subunit protein bL9 (149 aa).

Belongs to the bacterial ribosomal protein bL9 family.

Its function is as follows. Binds to the 23S rRNA. The polypeptide is Large ribosomal subunit protein bL9 (Xanthomonas campestris pv. campestris (strain 8004)).